A 306-amino-acid polypeptide reads, in one-letter code: Epoxyqueuosine reductase (306 aa).

The active-site Proton donor is the aspartate 131. One can recognise a 4Fe-4S ferredoxin-type domain in the interval 173 to 205 (LDLTYDHPVTDHCGTCTACIDACPTQAIVQPYV). The [4Fe-4S] cluster site is built by cysteine 185, cysteine 188, cysteine 191, cysteine 195, cysteine 211, cysteine 238, cysteine 241, and cysteine 245.

The protein belongs to the QueG family. In terms of assembly, monomer. Cob(II)alamin is required as a cofactor. Requires [4Fe-4S] cluster as cofactor.

It is found in the cytoplasm. It catalyses the reaction epoxyqueuosine(34) in tRNA + AH2 = queuosine(34) in tRNA + A + H2O. It functions in the pathway tRNA modification; tRNA-queuosine biosynthesis. Its function is as follows. Catalyzes the conversion of epoxyqueuosine (oQ) to queuosine (Q), which is a hypermodified base found in the wobble positions of tRNA(Asp), tRNA(Asn), tRNA(His) and tRNA(Tyr). This chain is Epoxyqueuosine reductase, found in Cellulophaga algicola (strain DSM 14237 / IC166 / ACAM 630).